An 898-amino-acid chain; its full sequence is MAASVENRRFTHHEPAVNGLVRTFKPVPNSHRSDSPDLGRQIPSSPKKQVATGEDSSSEDENENDYKELIQKGNGELEPSILDPRDEATADNWVERNATMVRLTGKHPFNSEAPLTRLMHHGFITPAPLHYVRNHGPVPKARWEDWSVEVCGLVKRPARFTMDRLVTEFRSREFPVTLVCAGNRRKEQNMVKKTIGFNWGAAGVSTSVWRGVPLRDVLKRCGIFSRGRGAFNVCFEGAEDLPGGGGSKYGTSVKYEMAMDPARDIILGYMQNGERLSPDHGFPVRMIIPGFIGGRMVKWLKRIIVTTKESDNYYHYNDNRVLPSHVDADVAKAEAWWYKPEHIINELNINSVITTPCHEEILPINSWTTQRPYTLRGYAYSGGGRKVTRVEITMNGGEKWRVCALDHPEKPNKYGKYWCWCFWSLEVEVLDLLGAKEIAVRAWDEAHNTQPEKLIWNVMGMMNNCWFRVKTNVCKAHMGEIGIAFEHPTVPGNESGGWMAREKNLETSSDANQSLKKSVSSPFMNTSSKMFSMSEVKKHNSAESAWIIVHGHIYDCTHFLKDHPGGADSILINAGTDCTEEFDAIHSDKAKKMLEDYRIGELITTGYVSDSPNSTVHGASNTSHLAPIKEIAPLRNVALIPGAKIPTKLVYKKSLSHDVRLFRLALPSDDQVLGLPVGKHVFLCATIDDKLCMRAYTPTSTIDEVGYLDLVVKIYFKNSNPRFPNGGLMSQHLDSLPIGSVLHVKGPLGHVEYTGRGNFLVHGEPKFAKRLAMVAGGTGITPIYQVIQAILKDPEDETEMFVVYANRTEDDILLREELDDWAKKHEKLKVWYVVKESKREGWEYSVGYIRESILREHIPEGSDDVLALACGAPSMIEEAVRLNLEKMNYDTKNSLIIF.

Positions 1 to 15 (MAASVENRRFTHHEP) are enriched in basic and acidic residues. The tract at residues 1 to 65 (MAASVENRRF…SSSEDENEND (65 aa)) is disordered. Residue C180 coordinates Mo-molybdopterin. One can recognise a Cytochrome b5 heme-binding domain in the interval 528 to 603 (SKMFSMSEVK…LEDYRIGELI (76 aa)). The heme site is built by H563 and H586. In terms of domain architecture, FAD-binding FR-type spans 642–754 (GAKIPTKLVY…KGPLGHVEYT (113 aa)). Residues 694–697 (RAYT), 711–715 (VVKIY), F716, F723, 728–730 (LMS), and T781 contribute to the FAD site.

It belongs to the nitrate reductase family. In terms of assembly, homodimer. FAD serves as cofactor. The cofactor is heme. Requires Mo-molybdopterin as cofactor.

The enzyme catalyses nitrite + NAD(+) + H2O = nitrate + NADH + H(+). It catalyses the reaction nitrite + NADP(+) + H2O = nitrate + NADPH + H(+). Functionally, nitrate reductase is a key enzyme involved in the first step of nitrate assimilation in plants, fungi and bacteria. This chain is Nitrate reductase [NAD(P)H] (NIA1), found in Betula pendula (European white birch).